Consider the following 722-residue polypeptide: Solute carrier organic anion transporter family member 4A1 (722 aa).

Residues 1–52 (MPLHQLGDKPLTFPSPNSAMENGLDHTPPSRRASPGTPLSPGSLRSAAHSPL) form a disordered region. The Cytoplasmic segment spans residues 1–103 (MPLHQLGDKP…PCLQVLNTPK (103 aa)). Ser-34 is modified (phosphoserine). At Thr-37 the chain carries Phosphothreonine. Phosphoserine is present on residues Ser-40, Ser-43, Ser-46, and Ser-50. The chain crosses the membrane as a helical span at residues 104–124 (GILFFLCAAAFLQGMTVNGFI). Topologically, residues 125–143 (NTVITSLERRYDLHSYQSG) are extracellular. The helical transmembrane segment at 144–164 (LIASSYDIAACLCLTFVSYFG) threads the bilayer. The Cytoplasmic segment spans residues 165–170 (GSGHKP). Residues 171 to 195 (RWLGWGVLLMGTGSLVFALPHFTAG) form a helical membrane-spanning segment. Residues 196 to 222 (RYEVELDAGVRTCPANPGAVCADSTSG) are Extracellular-facing. The chain crosses the membrane as a helical span at residues 223–253 (LSRYQLVFMLGQFLHGVGATPLYTLGVTYLD). Residues 254–272 (ENVKSSCSPVYIAIFYTAA) are Cytoplasmic-facing. Residues 273 to 293 (ILGPAAGYLIGGALLNIYTEM) form a helical membrane-spanning segment. The Extracellular portion of the chain corresponds to 294 to 307 (GRRTELTTESPLWV). Residues 308-332 (GAWWVGFLGSGAAAFFTAVPILGYP) form a helical membrane-spanning segment. The Cytoplasmic portion of the chain corresponds to 333–378 (RQLPGSQRYAVMRAAEMHQLKDSSRGEASNPDFGKTIRDLPLSIWL). Residues 379–400 (LLKNPTFILLCLAGATEATLIT) traverse the membrane as a helical segment. The Extracellular segment spans residues 401–420 (GMSTFSPKFLESQFSLSASE). A helical membrane pass occupies residues 421–444 (AATLFGYLVVPAGGGGTFLGGFFV). Over 445–448 (NKLR) the chain is Cytoplasmic. Residues 449–471 (LRGSAVIKFCLFCTVVSLLGILV) form a helical membrane-spanning segment. At 472 to 580 (FSLHCPSVPM…TSTCQRKPLL (109 aa)) the chain is on the extracellular side. The region spanning 498–555 (LNLTAPCNAACSCQPEHYSPVCGSDGLMYFSLCHAGCPAATETNVDGQKVYRDCSCIP) is the Kazal-like domain. N-linked (GlcNAc...) asparagine glycosylation is present at Asn-499. Cystine bridges form between Cys-504/Cys-534, Cys-510/Cys-530, and Cys-519/Cys-553. N-linked (GlcNAc...) asparagine glycosylation occurs at Asn-557. The chain crosses the membrane as a helical span at residues 581–603 (LVFIFVVIFFTFLSSIPALTATL). Residues 604–612 (RCVRDPQRS) lie on the Cytoplasmic side of the membrane. The chain crosses the membrane as a helical span at residues 613–638 (FALGIQWIVVRILGGIPGPIAFGWVI). The Extracellular portion of the chain corresponds to 639–671 (DKACLLWQDQCGQQGSCLVYQNSAMSRYILIMG). Residues 672-689 (LLYKVLGVLFFAIACFLY) traverse the membrane as a helical segment. Topologically, residues 690 to 722 (KPLSESSDGLETCLPSQSSAPDSATDSQLQSSV) are cytoplasmic. Residues 703-722 (LPSQSSAPDSATDSQLQSSV) form a disordered region.

Belongs to the organo anion transporter (TC 2.A.60) family. As to expression, widely expressed. Expressed in placental trophoblasts. Expressed in pancreas, kidney, skeletal muscle, liver, lung, brain, heart, colon, small intestine, ovary, testis, prostate, thymus and spleen. In testis, primarily localized to Leydig cells.

Its subcellular location is the cell membrane. The catalysed reaction is 3,3',5-triiodo-L-thyronine(out) + L-glutamate(in) = 3,3',5-triiodo-L-thyronine(in) + L-glutamate(out). It catalyses the reaction L-thyroxine(out) + L-glutamate(in) = L-thyroxine(in) + L-glutamate(out). The enzyme catalyses estrone 3-sulfate(out) + L-glutamate(in) = estrone 3-sulfate(in) + L-glutamate(out). It carries out the reaction taurocholate(out) + L-glutamate(in) = taurocholate(in) + L-glutamate(out). The catalysed reaction is 3,3',5-triiodo-L-thyronine(out) = 3,3',5-triiodo-L-thyronine(in). It catalyses the reaction L-thyroxine(out) = L-thyroxine(in). The enzyme catalyses 3,3',5'-triiodo-L-thyronine(out) = 3,3',5'-triiodo-L-thyronine(in). It carries out the reaction estrone 3-sulfate(out) = estrone 3-sulfate(in). The catalysed reaction is 17beta-estradiol 17-O-(beta-D-glucuronate)(out) = 17beta-estradiol 17-O-(beta-D-glucuronate)(in). It catalyses the reaction taurocholate(out) = taurocholate(in). The enzyme catalyses prostaglandin E2(out) = prostaglandin E2(in). Organic anion antiporter with apparent broad substrate specificity. Recognizes various substrates including thyroid hormones 3,3',5-triiodo-L-thyronine (T3), L-thyroxine (T4) and 3,3',5'-triiodo-L-thyronine (rT3), conjugated steroids such as estrone 3-sulfate and estradiol 17-beta glucuronide, bile acids such as taurocholate and prostanoids such as prostaglandin E2, likely operating in a tissue-specific manner. May be involved in uptake of metabolites from the circulation into organs such as kidney, liver or placenta. Possibly drives the selective transport of thyroid hormones and estrogens coupled to an outward glutamate gradient across the microvillous membrane of the placenta. The transport mechanism, its electrogenicity and potential tissue-specific counterions remain to be elucidated. The polypeptide is Solute carrier organic anion transporter family member 4A1 (SLCO4A1) (Homo sapiens (Human)).